A 255-amino-acid polypeptide reads, in one-letter code: 5'-nucleotidase SurE (255 aa).

Asp-8, Asp-9, Ser-40, and Asn-93 together coordinate a divalent metal cation.

The protein belongs to the SurE nucleotidase family. A divalent metal cation is required as a cofactor.

The protein localises to the cytoplasm. The enzyme catalyses a ribonucleoside 5'-phosphate + H2O = a ribonucleoside + phosphate. Nucleotidase that shows phosphatase activity on nucleoside 5'-monophosphates. The sequence is that of 5'-nucleotidase SurE from Rhodopseudomonas palustris (strain HaA2).